Reading from the N-terminus, the 313-residue chain is tRNA pseudouridine synthase B (313 aa).

Asp-46 serves as the catalytic Nucleophile.

This sequence belongs to the pseudouridine synthase TruB family. Type 1 subfamily.

It carries out the reaction uridine(55) in tRNA = pseudouridine(55) in tRNA. In terms of biological role, responsible for synthesis of pseudouridine from uracil-55 in the psi GC loop of transfer RNAs. The protein is tRNA pseudouridine synthase B of Nitrosospira multiformis (strain ATCC 25196 / NCIMB 11849 / C 71).